We begin with the raw amino-acid sequence, 107 residues long: MTAYTLADLAALVASRAGTDPATSYTAKLLSEGPAKAAKKLGEEAVEAAIAAVQGDKTGLRNEAADVLYHLVVLLWAGGVELDAVMAELERRTAQSGIAEKAARRPA.

It belongs to the PRA-PH family.

The protein resides in the cytoplasm. It carries out the reaction 1-(5-phospho-beta-D-ribosyl)-ATP + H2O = 1-(5-phospho-beta-D-ribosyl)-5'-AMP + diphosphate + H(+). Its pathway is amino-acid biosynthesis; L-histidine biosynthesis; L-histidine from 5-phospho-alpha-D-ribose 1-diphosphate: step 2/9. The polypeptide is Phosphoribosyl-ATP pyrophosphatase (Methylobacterium radiotolerans (strain ATCC 27329 / DSM 1819 / JCM 2831 / NBRC 15690 / NCIMB 10815 / 0-1)).